A 210-amino-acid chain; its full sequence is Ribonuclease HII (210 aa).

Residues 17-206 (DIICGVDEAG…VRALLGGVTP (190 aa)) form the RNase H type-2 domain. A divalent metal cation-binding residues include Asp23, Glu24, and Asp115.

The protein belongs to the RNase HII family. Requires Mn(2+) as cofactor. Mg(2+) is required as a cofactor.

Its subcellular location is the cytoplasm. It catalyses the reaction Endonucleolytic cleavage to 5'-phosphomonoester.. Its function is as follows. Endonuclease that specifically degrades the RNA of RNA-DNA hybrids. In Janthinobacterium sp. (strain Marseille) (Minibacterium massiliensis), this protein is Ribonuclease HII.